Consider the following 452-residue polypeptide: Probable cytosolic iron-sulfur protein assembly protein 1 (452 aa).

Over residues 1 to 12 (MPPPTTPTPNPS) the composition is skewed to pro residues. The disordered stretch occupies residues 1–24 (MPPPTTPTPNPSIPQKATLTPLPP). 6 WD repeats span residues 70 to 121 (GHAR…DAAA), 161 to 200 (GHEN…QGGD), 213 to 267 (EHDG…EWVC), 273 to 319 (GHGG…FGGV), 340 to 379 (VHTR…EDVA), and 411 to 452 (YEVN…VRIS).

This sequence belongs to the WD repeat CIA1 family.

In terms of biological role, essential component of the cytosolic iron-sulfur (Fe/S) protein assembly machinery. Required for the maturation of extramitochondrial Fe/S proteins. The chain is Probable cytosolic iron-sulfur protein assembly protein 1 from Chaetomium globosum (strain ATCC 6205 / CBS 148.51 / DSM 1962 / NBRC 6347 / NRRL 1970) (Soil fungus).